Here is a 510-residue protein sequence, read N- to C-terminus: NAD(P)H-quinone oxidoreductase subunit 2, chloroplastic (510 aa).

The next 12 helical transmembrane spans lie at Leu-24 to Leu-44, Trp-59 to Trp-79, Ile-99 to Ile-119, Met-124 to Cys-144, Phe-149 to Tyr-169, Tyr-183 to Gly-203, Ile-229 to Phe-249, Trp-295 to Ile-315, Met-323 to Asp-343, Gly-347 to Ala-367, Ala-395 to Phe-415, and Leu-418 to Leu-438.

The protein belongs to the complex I subunit 2 family. In terms of assembly, NDH is composed of at least 16 different subunits, 5 of which are encoded in the nucleus.

It localises to the plastid. The protein localises to the chloroplast thylakoid membrane. It catalyses the reaction a plastoquinone + NADH + (n+1) H(+)(in) = a plastoquinol + NAD(+) + n H(+)(out). It carries out the reaction a plastoquinone + NADPH + (n+1) H(+)(in) = a plastoquinol + NADP(+) + n H(+)(out). Its function is as follows. NDH shuttles electrons from NAD(P)H:plastoquinone, via FMN and iron-sulfur (Fe-S) centers, to quinones in the photosynthetic chain and possibly in a chloroplast respiratory chain. The immediate electron acceptor for the enzyme in this species is believed to be plastoquinone. Couples the redox reaction to proton translocation, and thus conserves the redox energy in a proton gradient. The chain is NAD(P)H-quinone oxidoreductase subunit 2, chloroplastic from Phormium tenax (New Zealand flax).